The sequence spans 520 residues: Aldehyde dehydrogenase 5, mitochondrial (520 aa).

A mitochondrion-targeting transit peptide spans methionine 1–tyrosine 23. Residue glycine 266–glycine 271 coordinates NAD(+). The Proton acceptor role is filled by glutamate 288. Cysteine 322 functions as the Nucleophile in the catalytic mechanism.

This sequence belongs to the aldehyde dehydrogenase family.

It localises to the mitochondrion matrix. It catalyses the reaction an aldehyde + NADP(+) + H2O = a carboxylate + NADPH + 2 H(+). The enzyme catalyses an aldehyde + NAD(+) + H2O = a carboxylate + NADH + 2 H(+). It functions in the pathway alcohol metabolism; ethanol degradation; acetate from ethanol: step 2/2. With respect to regulation, induced by potassium ions. Its function is as follows. Minor mitochondrial aldehyde dehydrogenase isoform. Plays a role in regulation or biosynthesis of electron transport chain components. Involved in the biosynthesis of acetate during anaerobic growth on glucose. This chain is Aldehyde dehydrogenase 5, mitochondrial (ALD5), found in Saccharomyces cerevisiae (strain YJM789) (Baker's yeast).